The primary structure comprises 113 residues: Cytochrome c oxidase subunit 7A2-like, mitochondrial (113 aa).

Residues Met1 to Ser54 constitute a mitochondrion transit peptide. Lys68 is modified (N6-acetyllysine). A helical transmembrane segment spans residues Pro81–Met106.

Belongs to the cytochrome c oxidase VIIa family. As to quaternary structure, interacts with the mitochondrial respiratory complexes III (CIII) and IV (CIV), promoting their association.

The protein resides in the mitochondrion inner membrane. It functions in the pathway energy metabolism; oxidative phosphorylation. Functionally, assembly factor that mediates the formation of some mitochondrial respiratory supercomplexes (respirasomes), thereby promoting oxidative phosphorylation and energy metabolism. Acts as a molecular adapter that associates with both mitochondrial respiratory complexes III (CIII) and IV (CIV), promoting their association. Mediates the formation of various mitochondrial respiratory supercomplexes, such as MCIII(2)IV(2), composed of two CIII and two CIV, and the CS-respirasome (MCI(1)III(2)IV(2)), composed of one CI, two CIII and two CIV. Not involved in the formation of the canonical respirasome (MCI(1)III(2)IV(1)), composed of one CI, two CIII and one CIV. The formation of different respirasomes is important for cell adaptation to oxygen conditions and prevent metabolic exhaustion: supercomplexes mediated by COX7A2L/SCAF1 are required to maintain oxidative phosphorylation upon low oxygen conditions and promote metabolic rewiring toward glycolysis. The sequence is that of Cytochrome c oxidase subunit 7A2-like, mitochondrial from Mus musculus (Mouse).